The following is a 178-amino-acid chain: Large ribosomal subunit protein uL6 (178 aa).

The protein belongs to the universal ribosomal protein uL6 family. As to quaternary structure, part of the 50S ribosomal subunit.

Functionally, this protein binds to the 23S rRNA, and is important in its secondary structure. It is located near the subunit interface in the base of the L7/L12 stalk, and near the tRNA binding site of the peptidyltransferase center. The sequence is that of Large ribosomal subunit protein uL6 from Streptococcus agalactiae serotype V (strain ATCC BAA-611 / 2603 V/R).